Reading from the N-terminus, the 357-residue chain is Probable leucine aminopeptidase TRV_02148.1 (357 aa).

Residues methionine 1–alanine 15 form the signal peptide. Asparagine 76 carries an N-linked (GlcNAc...) asparagine glycan. Residues histidine 167 and aspartate 185 each contribute to the Zn(2+) site. Residues aspartate 169 to serine 188 are disordered. A glycan (N-linked (GlcNAc...) asparagine) is linked at asparagine 186. 2 residues coordinate Zn(2+): glutamate 224 and aspartate 251. An N-linked (GlcNAc...) asparagine glycan is attached at asparagine 269. Cysteine 291 and cysteine 295 are joined by a disulfide. Histidine 324 contributes to the Zn(2+) binding site.

Belongs to the peptidase M28 family. M28E subfamily. In terms of assembly, monomer. It depends on Zn(2+) as a cofactor.

It localises to the secreted. In terms of biological role, probable extracellular aminopeptidase which contributes to pathogenicity. The polypeptide is Probable leucine aminopeptidase TRV_02148.1 (Trichophyton verrucosum (strain HKI 0517)).